Consider the following 292-residue polypeptide: G1/S-specific cyclin-D3 (292 aa).

In terms of domain architecture, Cyclin N-terminal spans 27-152; it reads VLQSLLRLEE…LVLGKLKWDL (126 aa). Positions 256–292 are disordered; it reads REAAQTAPSPVPKAPRGSSSQGPSQTSTPTDVTAIHL. Residues serine 264 and serine 279 each carry the phosphoserine modification. Residues 272 to 285 show a composition bias toward low complexity; sequence GSSSQGPSQTSTPT. Threonine 283 is modified (phosphothreonine).

This sequence belongs to the cyclin family. Cyclin D subfamily. In terms of assembly, interacts with the CDK4 and CDK6 protein kinases to form a serine/threonine kinase holoenzyme complex. The cyclin subunit imparts substrate specificity to the complex. Interacts with ATF5. Interacts with EIF3K. Component of the ternary complex cyclin D/CDK4/CDKN1B required for nuclear translocation and modulation of CDK4-mediated kinase activity. Can form similar complexes with either CDKN1A or CDKN2A. Phosphorylation at Thr-283 by MAP kinases is required for ubiquitination and degradation by the DCX(AMBRA1) complex. Post-translationally, ubiquitinated by the DCX(AMBRA1) complex during the transition from G1 to S cell phase, leading to its degradation: ubiquitination is dependent on Thr-283 phosphorylation. The DCX(AMBRA1) complex represents the major regulator of CCND3 stability during the G1/S transition. Polyubiquitinated by the SCF(FBXL2) complex, leading to proteasomal degradation.

It is found in the nucleus. Its subcellular location is the cytoplasm. Functionally, regulatory component of the cyclin D3-CDK4 (DC) complex that phosphorylates and inhibits members of the retinoblastoma (RB) protein family including RB1 and regulates the cell-cycle during G(1)/S transition. Phosphorylation of RB1 allows dissociation of the transcription factor E2F from the RB/E2F complex and the subsequent transcription of E2F target genes which are responsible for the progression through the G(1) phase. Hypophosphorylates RB1 in early G(1) phase. Cyclin D-CDK4 complexes are major integrators of various mitogenenic and antimitogenic signals. Component of the ternary complex, cyclin D3/CDK4/CDKN1B, required for nuclear translocation and activity of the cyclin D-CDK4 complex. Shows transcriptional coactivator activity with ATF5 independently of CDK4. This is G1/S-specific cyclin-D3 from Mus musculus (Mouse).